Here is a 237-residue protein sequence, read N- to C-terminus: 2,3-bisphosphoglycerate-dependent phosphoglycerate mutase (237 aa).

Substrate is bound by residues 8–15, 21–22, Arg-60, 87–90, Lys-98, 114–115, and 180–181; these read RHGQSQWN, TG, ERHY, RR, and GN. Catalysis depends on His-9, which acts as the Tele-phosphohistidine intermediate. The active-site Proton donor/acceptor is the Glu-87.

Belongs to the phosphoglycerate mutase family. BPG-dependent PGAM subfamily. Homodimer.

The catalysed reaction is (2R)-2-phosphoglycerate = (2R)-3-phosphoglycerate. Its pathway is carbohydrate degradation; glycolysis; pyruvate from D-glyceraldehyde 3-phosphate: step 3/5. Catalyzes the interconversion of 2-phosphoglycerate and 3-phosphoglycerate. This Caulobacter sp. (strain K31) protein is 2,3-bisphosphoglycerate-dependent phosphoglycerate mutase.